Consider the following 534-residue polypeptide: MKRSSLVDSCSYSRIFRSIFCLLSFCIFFLTTTNAQVMHRRLWPWPLWPRPYPQPWPMNPPTPDPSPKPVAPPGPSSKPVAPPGPSPCPSPPPKPQPKPPPAPSPSPCPSPPPKPQPKPVPPPACPPTPPKPQPKPAPPPEPKPAPPPAPKPVPCPSPPKPPAPTPKPVPPHGPPPKPAPAPTPAPSPKPAPSPPKPENKTIPAVFFFGDSVFDTGNNNNLETKIKSNYRPYGMDFKFRVATGRFSNGMVASDYLAKYMGVKEIVPAYLDPKIQPNDLLTGVSFASGGAGYNPTTSEAANAIPMLDQLTYFQDYIEKVNRLVRQEKSQYKLAGLEKTNQLISKGVAIVVGGSNDLIITYFGSGAQRLKNDIDSYTTIIADSAASFVLQLYGYGARRIGVIGTPPLGCVPSQRLKKKKICNEELNYASQLFNSKLLLILGQLSKTLPNSTFVYMDIYTIISQMLETPAAYGFEETKKPCCKTGLLSAGALCKKSTSKICPNTSSYLFWDGVHPTQRAYKTINKVLIKEYLHVLSK.

The first 35 residues, M1–A35, serve as a signal peptide directing secretion. The span at N59–K196 shows a compositional bias: pro residues. The segment at N59–I202 is disordered. The active-site Nucleophile is S211. Residues D508 and H511 contribute to the active site.

This sequence belongs to the 'GDSL' lipolytic enzyme family. Found in sporophytic and gametophytic cell types in the anther, only in male fertile plants.

The sequence is that of Anther-specific proline-rich protein APG (APG) from Arabidopsis thaliana (Mouse-ear cress).